Here is a 238-residue protein sequence, read N- to C-terminus: Orotidine 5'-phosphate decarboxylase (238 aa).

Residues Asp18, Lys40, 67 to 76 (DMKLLDIDNT), Thr122, Arg183, Gln192, and Arg213 contribute to the substrate site. Lys69 (proton donor) is an active-site residue.

The protein belongs to the OMP decarboxylase family. Type 1 subfamily. As to quaternary structure, homodimer.

It catalyses the reaction orotidine 5'-phosphate + H(+) = UMP + CO2. It participates in pyrimidine metabolism; UMP biosynthesis via de novo pathway; UMP from orotate: step 2/2. In terms of biological role, catalyzes the decarboxylation of orotidine 5'-monophosphate (OMP) to uridine 5'-monophosphate (UMP). This is Orotidine 5'-phosphate decarboxylase from Brucella abortus (strain S19).